A 222-amino-acid polypeptide reads, in one-letter code: Protein-L-isoaspartate O-methyltransferase (222 aa).

The active site involves S65.

The protein belongs to the methyltransferase superfamily. L-isoaspartyl/D-aspartyl protein methyltransferase family.

Its subcellular location is the cytoplasm. It catalyses the reaction [protein]-L-isoaspartate + S-adenosyl-L-methionine = [protein]-L-isoaspartate alpha-methyl ester + S-adenosyl-L-homocysteine. In terms of biological role, catalyzes the methyl esterification of L-isoaspartyl residues in peptides and proteins that result from spontaneous decomposition of normal L-aspartyl and L-asparaginyl residues. It plays a role in the repair and/or degradation of damaged proteins. The protein is Protein-L-isoaspartate O-methyltransferase of Chlorobium luteolum (strain DSM 273 / BCRC 81028 / 2530) (Pelodictyon luteolum).